The primary structure comprises 580 residues: N(6)-adenosine-methyltransferase catalytic subunit METTL3 (580 aa).

The interval methionine 1–proline 70 is disordered. An N-acetylserine; alternate modification is found at serine 2. Serine 2 bears the Phosphoserine; alternate mark. Residues glutamine 28 to asparagine 37 show a composition bias toward basic and acidic residues. Phosphoserine occurs at positions 43, 48, and 50. Residues alanine 55 to serine 67 show a composition bias toward low complexity. Glycyl lysine isopeptide (Lys-Gly) (interchain with G-Cter in SUMO1) cross-links involve residues lysine 177, lysine 211, lysine 212, and lysine 215. The disordered stretch occupies residues leucine 198–alanine 217. Residues alanine 210–lysine 215 carry the Nuclear localization signal motif. Serine 219, serine 243, and serine 350 each carry phosphoserine. Residues aspartate 377 to isoleucine 378 and aspartate 395 each bind S-adenosyl-L-methionine. The tract at residues proline 396–threonine 410 is gate loop 1. Interaction with METTL14 regions lie at residues glutamate 450–glutamate 454 and glutamine 464–lysine 480. Positions glutamine 462 to glycine 479 are interphase loop. A positively charged region required for RNA-binding region spans residues arginine 465 to histidine 478. The interval valine 507–aspartate 515 is gate loop 2. S-adenosyl-L-methionine-binding positions include lysine 513, arginine 536–asparagine 539, and asparagine 549–glutamine 550.

The protein belongs to the MT-A70-like family. Heterodimer; heterodimerizes with METTL14 to form an antiparallel heterodimer that constitutes an active methyltransferase. Component of the WMM complex, a N6-methyltransferase complex composed of a catalytic subcomplex, named MAC, and of an associated subcomplex, named MACOM. The MAC subcomplex is composed of METTL3 and METTL14. The MACOM subcomplex is composed of WTAP, ZC3H13, CBLL1/HAKAI, VIRMA, and, in some cases of RBM15 (RBM15 or RBM15B). Interacts with NCBP1/CBP80. Interacts with EIF4E. Interacts with EIF3B. Post-translationally, sumoylation inhibits the N6-adenosine-methyltransferase activity. Sumoylation does not affect subcellular location or interaction with METTL14. Desumoylated by SENP1. As to expression, present in both germ cells and somatic cells during testis development (at protein level).

The protein resides in the nucleus. It localises to the nucleus speckle. It is found in the cytoplasm. The enzyme catalyses an adenosine in mRNA + S-adenosyl-L-methionine = an N(6)-methyladenosine in mRNA + S-adenosyl-L-homocysteine + H(+). Its activity is regulated as follows. Methyltransferase activity is regulated by miRNAs via a sequence pairing mechanism. Methyltransferase activity is inhibited by sumoylation. The METTL3-METTL14 heterodimer forms a N6-methyltransferase complex that methylates adenosine residues at the N(6) position of some RNAs and regulates various processes such as the circadian clock, differentiation of embryonic and hematopoietic stem cells, cortical neurogenesis, response to DNA damage, differentiation of T-cells and primary miRNA processing. In the heterodimer formed with METTL14, METTL3 constitutes the catalytic core. N6-methyladenosine (m6A), which takes place at the 5'-[AG]GAC-3' consensus sites of some mRNAs, plays a role in mRNA stability, processing, translation efficiency and editing. M6A acts as a key regulator of mRNA stability: methylation is completed upon the release of mRNA into the nucleoplasm and promotes mRNA destabilization and degradation. In embryonic stem cells (ESCs), m6A methylation of mRNAs encoding key naive pluripotency-promoting transcripts results in transcript destabilization, promoting differentiation of ESCs. M6A regulates the length of the circadian clock: acts as an early pace-setter in the circadian loop by putting mRNA production on a fast-track for facilitating nuclear processing, thereby providing an early point of control in setting the dynamics of the feedback loop. M6A also regulates circadian regulation of hepatic lipid metabolism. M6A regulates spermatogonial differentiation and meiosis and is essential for male fertility and spermatogenesis. Also required for oogenesis. Involved in the response to DNA damage: in response to ultraviolet irradiation, METTL3 rapidly catalyzes the formation of m6A on poly(A) transcripts at DNA damage sites, leading to the recruitment of POLK to DNA damage sites. M6A is also required for T-cell homeostasis and differentiation: m6A methylation of transcripts of SOCS family members (SOCS1, SOCS3 and CISH) in naive T-cells promotes mRNA destabilization and degradation, promoting T-cell differentiation. Inhibits the type I interferon response by mediating m6A methylation of IFNB. M6A also regulates cortical neurogenesis: m6A methylation of transcripts related to transcription factors, neural stem cells, the cell cycle and neuronal differentiation during brain development promotes their destabilization and decay, promoting differentiation of radial glial cells. M6A also takes place in other RNA molecules, such as primary miRNA (pri-miRNAs). Mediates m6A methylation of Xist RNA, thereby participating in random X inactivation: m6A methylation of Xist leads to target YTHDC1 reader on Xist and promote transcription repression activity of Xist. METTL3 mediates methylation of pri-miRNAs, marking them for recognition and processing by DGCR8. Acts as a positive regulator of mRNA translation independently of the methyltransferase activity: promotes translation by interacting with the translation initiation machinery in the cytoplasm. The sequence is that of N(6)-adenosine-methyltransferase catalytic subunit METTL3 from Mus musculus (Mouse).